The primary structure comprises 200 residues: GTP cyclohydrolase-2 (200 aa).

50-54 (RVHSE) lines the GTP pocket. Residues C55, C66, and C68 each coordinate Zn(2+). GTP contacts are provided by residues Q71, 93–95 (EGR), and T115. D127 acts as the Proton acceptor in catalysis. R129 acts as the Nucleophile in catalysis. Residues T150 and K155 each contribute to the GTP site.

The protein belongs to the GTP cyclohydrolase II family. It depends on Zn(2+) as a cofactor.

It catalyses the reaction GTP + 4 H2O = 2,5-diamino-6-hydroxy-4-(5-phosphoribosylamino)-pyrimidine + formate + 2 phosphate + 3 H(+). The protein operates within cofactor biosynthesis; riboflavin biosynthesis; 5-amino-6-(D-ribitylamino)uracil from GTP: step 1/4. Functionally, catalyzes the conversion of GTP to 2,5-diamino-6-ribosylamino-4(3H)-pyrimidinone 5'-phosphate (DARP), formate and pyrophosphate. The polypeptide is GTP cyclohydrolase-2 (Acinetobacter baumannii (strain AB307-0294)).